Consider the following 346-residue polypeptide: Biotin synthase (346 aa).

One can recognise a Radical SAM core domain in the interval 38 to 256 (KQIQVSTLLS…IAVARIMMPT (219 aa)). Residues Cys-53, Cys-57, and Cys-60 each contribute to the [4Fe-4S] cluster site. [2Fe-2S] cluster contacts are provided by Cys-97, Cys-128, Cys-188, and Arg-260.

This sequence belongs to the radical SAM superfamily. Biotin synthase family. Homodimer. Requires [4Fe-4S] cluster as cofactor. The cofactor is [2Fe-2S] cluster.

The catalysed reaction is (4R,5S)-dethiobiotin + (sulfur carrier)-SH + 2 reduced [2Fe-2S]-[ferredoxin] + 2 S-adenosyl-L-methionine = (sulfur carrier)-H + biotin + 2 5'-deoxyadenosine + 2 L-methionine + 2 oxidized [2Fe-2S]-[ferredoxin]. Its pathway is cofactor biosynthesis; biotin biosynthesis; biotin from 7,8-diaminononanoate: step 2/2. Functionally, catalyzes the conversion of dethiobiotin (DTB) to biotin by the insertion of a sulfur atom into dethiobiotin via a radical-based mechanism. The chain is Biotin synthase from Salmonella arizonae (strain ATCC BAA-731 / CDC346-86 / RSK2980).